A 577-amino-acid polypeptide reads, in one-letter code: Zinc finger-containing ubiquitin peptidase 1 (577 aa).

The C2H2-type 1 zinc finger occupies 2 to 24; that stretch reads LSCNICGETVNSEPDMKAHLIVH. The segment at 29 to 52 adopts a C2H2-type 2; atypical zinc-finger fold; sequence IICPFCKLSGINYNEICFHIETVH. Positions 124–137 are enriched in basic and acidic residues; sequence ESRKYQKSREKKPG. The interval 124–145 is disordered; the sequence is ESRKYQKSREKKPGLSEAQGSI. The C2H2-type 3; atypical zinc finger occupies 153-176; the sequence is PECPFCGKIEGCSQDMEIHVKTKH. The segment at 192 to 214 adopts a C2H2-type 4 zinc-finger fold; it reads YDCPMCGLVCTNYHILQEHVDLH. An MIU region spans residues 225–247; the sequence is DRVQCSSDRELAHRLQQEEDRKR. Positions 238–260 are disordered; sequence RLQQEEDRKRKSEESRQEREEFQ. Positions 248–273 are zUBD/ZHA; the sequence is KSEESRQEREEFQKLQRQYGLDNSGG. An N6-acetyllysine modification is found at Lys261. Cys359 serves as the catalytic Nucleophile. The active-site Proton acceptor is His490. The active site involves Asp511.

Belongs to the peptidase C78 family. ZUFSP subfamily. In terms of assembly, interacts with RPA1 and RPA2.

The protein localises to the cytoplasm. It is found in the nucleus. It catalyses the reaction Thiol-dependent hydrolysis of ester, thioester, amide, peptide and isopeptide bonds formed by the C-terminal Gly of ubiquitin (a 76-residue protein attached to proteins as an intracellular targeting signal).. Functionally, deubiquitinase with endodeubiquitinase activity that specifically interacts with and cleaves 'Lys-63'-linked long polyubiquitin chains. Shows only weak activity against 'Lys-11' and 'Lys-48'-linked chains. Plays an important role in genome stability pathways, functioning to prevent spontaneous DNA damage and also promote cellular survival in response to exogenous DNA damage. Modulates the ubiquitination status of replication protein A (RPA) complex proteins in response to replication stress. The protein is Zinc finger-containing ubiquitin peptidase 1 of Mus musculus (Mouse).